Reading from the N-terminus, the 430-residue chain is Adenylosuccinate synthetase (430 aa).

GTP contacts are provided by residues 12 to 18 (GDEGKGK) and 40 to 42 (GHT). The Proton acceptor role is filled by Asp-13. The Mg(2+) site is built by Asp-13 and Gly-40. Residues 13–16 (DEGK), 38–41 (NAGH), Thr-128, Arg-142, Gln-223, Thr-238, and Arg-302 contribute to the IMP site. Residue His-41 is the Proton donor of the active site. 298 to 304 (TTTGRPR) contacts substrate. GTP-binding positions include Arg-304, 330 to 332 (SID), and 412 to 414 (SVG).

The protein belongs to the adenylosuccinate synthetase family. In terms of assembly, homodimer. Mg(2+) is required as a cofactor.

It is found in the cytoplasm. The catalysed reaction is IMP + L-aspartate + GTP = N(6)-(1,2-dicarboxyethyl)-AMP + GDP + phosphate + 2 H(+). The protein operates within purine metabolism; AMP biosynthesis via de novo pathway; AMP from IMP: step 1/2. Plays an important role in the de novo pathway of purine nucleotide biosynthesis. Catalyzes the first committed step in the biosynthesis of AMP from IMP. This Streptococcus pyogenes serotype M4 (strain MGAS10750) protein is Adenylosuccinate synthetase.